Reading from the N-terminus, the 103-residue chain is Large ribosomal subunit protein bL21 (103 aa).

The protein belongs to the bacterial ribosomal protein bL21 family. In terms of assembly, part of the 50S ribosomal subunit. Contacts protein L20.

This protein binds to 23S rRNA in the presence of protein L20. This Alkaliphilus oremlandii (strain OhILAs) (Clostridium oremlandii (strain OhILAs)) protein is Large ribosomal subunit protein bL21.